We begin with the raw amino-acid sequence, 427 residues long: Serine--tRNA ligase (427 aa).

231 to 233 (TAE) lines the L-serine pocket. 262 to 264 (RSE) lines the ATP pocket. L-serine is bound at residue E285. 349–352 (EISS) is a binding site for ATP. S385 contacts L-serine.

Belongs to the class-II aminoacyl-tRNA synthetase family. Type-1 seryl-tRNA synthetase subfamily. In terms of assembly, homodimer. The tRNA molecule binds across the dimer.

Its subcellular location is the cytoplasm. The enzyme catalyses tRNA(Ser) + L-serine + ATP = L-seryl-tRNA(Ser) + AMP + diphosphate + H(+). It catalyses the reaction tRNA(Sec) + L-serine + ATP = L-seryl-tRNA(Sec) + AMP + diphosphate + H(+). Its pathway is aminoacyl-tRNA biosynthesis; selenocysteinyl-tRNA(Sec) biosynthesis; L-seryl-tRNA(Sec) from L-serine and tRNA(Sec): step 1/1. Functionally, catalyzes the attachment of serine to tRNA(Ser). Is also able to aminoacylate tRNA(Sec) with serine, to form the misacylated tRNA L-seryl-tRNA(Sec), which will be further converted into selenocysteinyl-tRNA(Sec). The sequence is that of Serine--tRNA ligase from Brucella canis (strain ATCC 23365 / NCTC 10854 / RM-666).